Consider the following 259-residue polypeptide: Phosphatidylglycerol--prolipoprotein diacylglyceryl transferase (259 aa).

4 helical membrane passes run 9 to 29 (IIFS…VVGI), 55 to 75 (FITY…VLLY), 92 to 112 (EGGM…YLFC), and 117 to 137 (INFL…LFLG). Arg-138 is an a 1,2-diacyl-sn-glycero-3-phospho-(1'-sn-glycerol) binding site. 3 consecutive transmembrane segments (helical) span residues 172-192 (QLYE…YATF), 201-221 (GLNS…IEIF), and 228-248 (IGFI…MLLL).

It belongs to the Lgt family.

The protein localises to the cell inner membrane. The catalysed reaction is L-cysteinyl-[prolipoprotein] + a 1,2-diacyl-sn-glycero-3-phospho-(1'-sn-glycerol) = an S-1,2-diacyl-sn-glyceryl-L-cysteinyl-[prolipoprotein] + sn-glycerol 1-phosphate + H(+). Its pathway is protein modification; lipoprotein biosynthesis (diacylglyceryl transfer). Functionally, catalyzes the transfer of the diacylglyceryl group from phosphatidylglycerol to the sulfhydryl group of the N-terminal cysteine of a prolipoprotein, the first step in the formation of mature lipoproteins. In Rickettsia felis (strain ATCC VR-1525 / URRWXCal2) (Rickettsia azadi), this protein is Phosphatidylglycerol--prolipoprotein diacylglyceryl transferase.